The chain runs to 295 residues: ATP synthase gamma chain (295 aa).

The protein belongs to the ATPase gamma chain family. As to quaternary structure, F-type ATPases have 2 components, CF(1) - the catalytic core - and CF(0) - the membrane proton channel. CF(1) has five subunits: alpha(3), beta(3), gamma(1), delta(1), epsilon(1). CF(0) has three main subunits: a, b and c.

It is found in the cell inner membrane. In terms of biological role, produces ATP from ADP in the presence of a proton gradient across the membrane. The gamma chain is believed to be important in regulating ATPase activity and the flow of protons through the CF(0) complex. The polypeptide is ATP synthase gamma chain (Campylobacter fetus subsp. fetus (strain 82-40)).